We begin with the raw amino-acid sequence, 367 residues long: MDAQSSAKVNSRKRRKEVPGPNGATEEDGIPSKVQRCAVGLRQPAPFSDEIEVDFSKPYVRVTMEEACRGTPCERPVRVYADGIFDLFHSGHARALMQAKNLFPNTYLIVGVCSDELTHNFKGFTVMNENERYDAVQHCRYVDEVVRNAPWTLTPEFLAEHRIDFVAHDDIPYSSAGSDDVYKHIKEAGMFAPTQRTEGISTSDIITRIVRDYDVYARRNLQRGYTAKELNVSFINEKKYHLQERVDKVKKKVKDVEEKSKEFVQKVEEKSIDLIQKWEEKSREFIGSFLEMFGPEGALKHMLKEGKGRMLQAISPKQSPSSSPTHERSPSPSFRWPFSGKTSPSSSPASLSRCKAVTCDISEDEED.

Methionine 1 carries the N-acetylmethionine modification. The segment at 1–31 (MDAQSSAKVNSRKRRKEVPGPNGATEEDGIP) is disordered. Lysine 8 is modified (N6-acetyllysine). CTP contacts are provided by isoleucine 84, phenylalanine 85, histidine 92, and lysine 122. Residues lysine 122 and tryptophan 151 each coordinate phosphocholine. Residues histidine 168, aspartate 169, tyrosine 173, glutamine 195, arginine 196, threonine 197, and isoleucine 200 each contribute to the CTP site. Amphipathic regions lie at residues 228-287 (KELN…EFIG) and 298-315 (ALKH…QAIS). A Phosphoserine modification is found at serine 233. The interval 272 to 293 (IDLIQKWEEKSREFIGSFLEMF) is autoinhibitory (AI). A disordered region spans residues 313-367 (AISPKQSPSSSPTHERSPSPSFRWPFSGKTSPSSSPASLSRCKAVTCDISEDEED). A Phosphoserine; by PKC modification is found at serine 315. Positions 315-324 (SPKQSPSSSP) are enriched in polar residues. A phosphoserine mark is found at serine 319, serine 321, serine 322, and serine 323. Residues 319–324 (SPSSSP) form repeat 1. Residues 319 to 348 (SPSSSPTHERSPSPSFRWPFSGKTSPSSSP) form a 3 X repeats region. Threonine 325 carries the phosphothreonine modification. A phosphoserine mark is found at serine 329 and serine 331. A 2; approximate repeat occupies 329-333 (SPSPS). The segment covering 330-352 (PSPSFRWPFSGKTSPSSSPASLS) has biased composition (low complexity). A Phosphoserine; by PKC modification is found at serine 333. Threonine 342 is subject to Phosphothreonine. Residues serine 343, serine 345, serine 346, serine 347, serine 350, and serine 352 each carry the phosphoserine modification. Residues 343-348 (SPSSSP) form repeat 3. Position 358 is a phosphothreonine (threonine 358). Serine 362 carries the post-translational modification Phosphoserine; by CK2.

It belongs to the cytidylyltransferase family. As to quaternary structure, homodimer. The serine residues of the C-terminus are phosphorylated. The inactive soluble form is stabilized by phosphorylation, the active membrane bound form is promoted by anionic lipids or diacylglycerol, and is stabilized by dephosphorylation. In terms of processing, the N-terminus is blocked. Post-translationally, monoubiquitinated by the SCF(FBXL2) complex, leading to proteasomal degradation.

It localises to the cytoplasm. It is found in the cytosol. The protein resides in the membrane. Its subcellular location is the endoplasmic reticulum membrane. The protein localises to the nucleus. It catalyses the reaction phosphocholine + CTP + H(+) = CDP-choline + diphosphate. It functions in the pathway phospholipid metabolism; phosphatidylcholine biosynthesis; phosphatidylcholine from phosphocholine: step 1/2. Its activity is regulated as follows. Interconverts between an inactive cytosolic form and an active membrane-bound form. Activation involves disruption of an inhibitory interaction between helices at the base of the active site and the autoinhibitory (AI) region. Activated by N-methylethanolamine. Activated by oleic acid-containing phosphatidylcholine vesicles. Functionally, catalyzes the key rate-limiting step in the CDP-choline pathway for phosphatidylcholine biosynthesis. The polypeptide is Choline-phosphate cytidylyltransferase A (Pcyt1a) (Rattus norvegicus (Rat)).